A 129-amino-acid chain; its full sequence is MDKKAIFDSVSNMEEQIGELYQQLGDLKTNLGEMLEENNRLNLENEHLRRRLSLTDEATPEPKAETEAEHGVMAPNRKEAMQQMIELGEGYDNLVQLYKEGFHVCNVHFGSPRGNDEDCLFCLSLLNKK.

Residues leucine 52–glycine 71 form a disordered region. Residues proline 60 to glycine 71 show a composition bias toward basic and acidic residues. Residues histidine 103, cysteine 105, cysteine 119, and cysteine 122 each contribute to the Zn(2+) site.

This sequence belongs to the YabA family. As to quaternary structure, homotetramer. Interacts with both DnaA and DnaN, acting as a bridge between these two proteins. The cofactor is Zn(2+).

The protein resides in the cytoplasm. The protein localises to the nucleoid. Its function is as follows. Involved in control of chromosome replication initiation. Inhibits the cooperative binding of DnaA to the oriC region, thus negatively regulating initiation of chromosome replication. Inhibits the ability of DnaA-ATP to form a helix on DNA; does not disassemble preformed DnaA-DNA helices. Decreases the residence time of DnaA on the chromosome at its binding sites (oriC, replication forks and promoter-binding sites). Tethers DnaA to the replication machinery via the DNA polymerase beta sliding clamp subunit (dnaN). Associates with oriC and other DnaA targets on the chromosome in a DnaA-dependent manner. In Listeria monocytogenes serotype 4a (strain HCC23), this protein is Replication initiation control protein YabA.